Reading from the N-terminus, the 64-residue chain is Small ribosomal subunit protein eS17 (64 aa).

Belongs to the eukaryotic ribosomal protein eS17 family.

The sequence is that of Small ribosomal subunit protein eS17 from Methanococcoides burtonii (strain DSM 6242 / NBRC 107633 / OCM 468 / ACE-M).